The following is a 57-amino-acid chain: uncharacterized protein (57 aa).

Residues Thr34–Ala51 traverse the membrane as a helical segment.

It is found in the membrane. This is an uncharacterized protein from Dictyostelium discoideum (Social amoeba).